We begin with the raw amino-acid sequence, 470 residues long: Sulfate adenylyltransferase subunit 1 (470 aa).

In terms of domain architecture, tr-type G spans K22–T238. The tract at residues G31–S38 is G1. G31 to S38 contacts GTP. Residues G89 to D93 form a G2 region. The segment at D110–G113 is G3. Residues D110–H114 and N165–D168 each bind GTP. The interval N165 to D168 is G4. Residues S202–L204 are G5.

The protein belongs to the TRAFAC class translation factor GTPase superfamily. Classic translation factor GTPase family. CysN/NodQ subfamily. Heterodimer composed of CysD, the smaller subunit, and CysN.

It catalyses the reaction sulfate + ATP + H(+) = adenosine 5'-phosphosulfate + diphosphate. It functions in the pathway sulfur metabolism; hydrogen sulfide biosynthesis; sulfite from sulfate: step 1/3. Functionally, with CysD forms the ATP sulfurylase (ATPS) that catalyzes the adenylation of sulfate producing adenosine 5'-phosphosulfate (APS) and diphosphate, the first enzymatic step in sulfur assimilation pathway. APS synthesis involves the formation of a high-energy phosphoric-sulfuric acid anhydride bond driven by GTP hydrolysis by CysN coupled to ATP hydrolysis by CysD. This Francisella tularensis subsp. tularensis (strain WY96-3418) protein is Sulfate adenylyltransferase subunit 1.